A 317-amino-acid chain; its full sequence is Beta-ketoacyl-[acyl-carrier-protein] synthase III (317 aa).

Catalysis depends on residues Cys-112 and His-244. The ACP-binding stretch occupies residues 245–249; sequence QANIR. Asn-274 is an active-site residue.

Belongs to the thiolase-like superfamily. FabH family. As to quaternary structure, homodimer.

It is found in the cytoplasm. It carries out the reaction malonyl-[ACP] + acetyl-CoA + H(+) = 3-oxobutanoyl-[ACP] + CO2 + CoA. It functions in the pathway lipid metabolism; fatty acid biosynthesis. Its function is as follows. Catalyzes the condensation reaction of fatty acid synthesis by the addition to an acyl acceptor of two carbons from malonyl-ACP. Catalyzes the first condensation reaction which initiates fatty acid synthesis and may therefore play a role in governing the total rate of fatty acid production. Possesses both acetoacetyl-ACP synthase and acetyl transacylase activities. Its substrate specificity determines the biosynthesis of branched-chain and/or straight-chain of fatty acids. This chain is Beta-ketoacyl-[acyl-carrier-protein] synthase III, found in Rickettsia massiliae (strain Mtu5).